The primary structure comprises 113 residues: MKVDNFLNTYSMNSALLDRAAKARSLESSIKINDNDIVTKSKEDKALKEQTNAFEAFFLKQVLDVSLKSQNSLFGKDASDEIYSSMYNDTMSKALSGGMGFSKLLYDFLKERG.

The protein to H.pylori HP0245/JHP0230.

This is an uncharacterized protein from Campylobacter jejuni subsp. jejuni serotype O:2 (strain ATCC 700819 / NCTC 11168).